The chain runs to 1119 residues: Protein translocase subunit SecA (1119 aa).

Residues Gln175, 213 to 217, and Asp714 contribute to the ATP site; that span reads GEGKT. 4 residues coordinate Zn(2+): Cys1106, Cys1108, Cys1117, and Cys1118.

The protein belongs to the SecA family. In terms of assembly, monomer and homodimer. Part of the essential Sec protein translocation apparatus which comprises SecA, SecYEG and auxiliary proteins SecDF. Other proteins may also be involved. Zn(2+) is required as a cofactor.

Its subcellular location is the cell inner membrane. The protein resides in the cytoplasm. The enzyme catalyses ATP + H2O + cellular proteinSide 1 = ADP + phosphate + cellular proteinSide 2.. Part of the Sec protein translocase complex. Interacts with the SecYEG preprotein conducting channel. Has a central role in coupling the hydrolysis of ATP to the transfer of proteins into and across the cell membrane, serving as an ATP-driven molecular motor driving the stepwise translocation of polypeptide chains across the membrane. This is Protein translocase subunit SecA from Azobacteroides pseudotrichonymphae genomovar. CFP2.